A 495-amino-acid polypeptide reads, in one-letter code: Glutamate--tRNA ligase (495 aa).

The 'HIGH' region motif lies at 12–22 (PSPTGHLHIGN). The short motif at 259 to 263 (KLSKR) is the 'KMSKS' region element. Lys262 is a binding site for ATP.

This sequence belongs to the class-I aminoacyl-tRNA synthetase family. Glutamate--tRNA ligase type 1 subfamily. Monomer.

It is found in the cytoplasm. The catalysed reaction is tRNA(Glu) + L-glutamate + ATP = L-glutamyl-tRNA(Glu) + AMP + diphosphate. Functionally, catalyzes the attachment of glutamate to tRNA(Glu) in a two-step reaction: glutamate is first activated by ATP to form Glu-AMP and then transferred to the acceptor end of tRNA(Glu). This chain is Glutamate--tRNA ligase, found in Ligilactobacillus salivarius (strain UCC118) (Lactobacillus salivarius).